The primary structure comprises 251 residues: Ubiquinone/menaquinone biosynthesis C-methyltransferase UbiE (251 aa).

Residues Thr74, Asp95, and 123 to 124 (NA) each bind S-adenosyl-L-methionine.

The protein belongs to the class I-like SAM-binding methyltransferase superfamily. MenG/UbiE family.

The enzyme catalyses a 2-demethylmenaquinol + S-adenosyl-L-methionine = a menaquinol + S-adenosyl-L-homocysteine + H(+). The catalysed reaction is a 2-methoxy-6-(all-trans-polyprenyl)benzene-1,4-diol + S-adenosyl-L-methionine = a 5-methoxy-2-methyl-3-(all-trans-polyprenyl)benzene-1,4-diol + S-adenosyl-L-homocysteine + H(+). The protein operates within quinol/quinone metabolism; menaquinone biosynthesis; menaquinol from 1,4-dihydroxy-2-naphthoate: step 2/2. Its pathway is cofactor biosynthesis; ubiquinone biosynthesis. Its function is as follows. Methyltransferase required for the conversion of demethylmenaquinol (DMKH2) to menaquinol (MKH2) and the conversion of 2-polyprenyl-6-methoxy-1,4-benzoquinol (DDMQH2) to 2-polyprenyl-3-methyl-6-methoxy-1,4-benzoquinol (DMQH2). The sequence is that of Ubiquinone/menaquinone biosynthesis C-methyltransferase UbiE from Shewanella baltica (strain OS155 / ATCC BAA-1091).